The sequence spans 419 residues: Peptide chain release factor subunit 1 (419 aa).

The protein belongs to the eukaryotic release factor 1 family. As to quaternary structure, heterodimer of two subunits, one of which binds GTP.

The protein resides in the cytoplasm. Functionally, directs the termination of nascent peptide synthesis (translation) in response to the termination codons UAA, UAG and UGA. This Methanococcus maripaludis (strain C6 / ATCC BAA-1332) protein is Peptide chain release factor subunit 1.